Consider the following 358-residue polypeptide: ATPase ASNA1 homolog (358 aa).

Residue 35–42 (KGGVGKTT) coordinates ATP. The active site involves Asp64. ATP-binding residues include Glu235 and Asn262.

Belongs to the arsA ATPase family. As to quaternary structure, homodimer.

The protein localises to the cytoplasm. It localises to the endoplasmic reticulum. In terms of biological role, ATPase required for the post-translational delivery of tail-anchored (TA) proteins to the endoplasmic reticulum. Recognizes and selectively binds the transmembrane domain of TA proteins in the cytosol. This complex then targets to the endoplasmic reticulum by membrane-bound receptors, where the tail-anchored protein is released for insertion. This process is regulated by ATP binding and hydrolysis. ATP binding drives the homodimer towards the closed dimer state, facilitating recognition of newly synthesized TA membrane proteins. ATP hydrolysis is required for insertion. Subsequently, the homodimer reverts towards the open dimer state, lowering its affinity for the membrane-bound receptor, and returning it to the cytosol to initiate a new round of targeting. The sequence is that of ATPase ASNA1 homolog from Babesia bovis.